The following is a 513-amino-acid chain: MEKFEGYSEKQKSRQQNFVFPLLFQEYIYAFAHDYGLNGCKPVEILGCNTKKFSSLLVKRLIIRMYQQNFWINSVNHPNQDLLLDRSNHFYSEFYSQILSEGFAIVVEIPFSLGELSYSQEKEIPKFQNLQSIHSIFPFLEDKFLHLHSISHIEIPYPIHLEILVQFLEYRIQDVPSLHLLRFFLNYYSNWNSLITSMKSFFLLKKENKRLFQFLYNSYVSEYEFFLLFLHKQSSCLPLTSSGTFLERIIFSRKMEHFGVMYPEFFRKTIWIFMDPLMHYVRYQGKAILASKGTLLLKKKWKSYLVNFSQYFFSFWTQPQRICLNRLTNSCFDFMGYLSSVPINTLLVRNQMLDNSFRISIRMKKFDTIVPATPLIGALSKAQFCTGSGHPISKPVWTDLSDWDILDRFGRICRNLFHYHSGSSKKQTLYRLKYILRLSCARTLARKHKSTVRTFMQRLGSVFLEEFFTEEEQVFSLMFIKTTHFSFHGSHSDRIWYLDIIRINDLVNPLTLN.

Belongs to the intron maturase 2 family. MatK subfamily.

The protein localises to the plastid. It is found in the chloroplast. Its function is as follows. Usually encoded in the trnK tRNA gene intron. Probably assists in splicing its own and other chloroplast group II introns. The sequence is that of Maturase K from Danthonia spicata (Poverty oatgrass).